Reading from the N-terminus, the 431-residue chain is L-cysteine:1D-myo-inositol 2-amino-2-deoxy-alpha-D-glucopyranoside ligase (431 aa).

Cysteine 44 contributes to the Zn(2+) binding site. L-cysteinyl-5'-AMP is bound by residues 44 to 47 (CGIT), threonine 59, and 82 to 84 (NVT). The 'HIGH' region motif lies at 46 to 56 (ITPYDATHLGH). A 'ERGGDP' region motif is present at residues 187-192 (ERGGDP). Tryptophan 227 is a binding site for L-cysteinyl-5'-AMP. Residue cysteine 231 coordinates Zn(2+). L-cysteinyl-5'-AMP is bound at residue 249-251 (GND). Position 256 (histidine 256) interacts with Zn(2+). Residue isoleucine 283 participates in L-cysteinyl-5'-AMP binding. The 'KMSKS' region signature appears at 289–293 (KMSKS).

Belongs to the class-I aminoacyl-tRNA synthetase family. MshC subfamily. As to quaternary structure, monomer. Zn(2+) serves as cofactor.

The enzyme catalyses 1D-myo-inositol 2-amino-2-deoxy-alpha-D-glucopyranoside + L-cysteine + ATP = 1D-myo-inositol 2-(L-cysteinylamino)-2-deoxy-alpha-D-glucopyranoside + AMP + diphosphate + H(+). In terms of biological role, catalyzes the ATP-dependent condensation of GlcN-Ins and L-cysteine to form L-Cys-GlcN-Ins. The polypeptide is L-cysteine:1D-myo-inositol 2-amino-2-deoxy-alpha-D-glucopyranoside ligase (Stackebrandtia nassauensis (strain DSM 44728 / CIP 108903 / NRRL B-16338 / NBRC 102104 / LLR-40K-21)).